A 181-amino-acid polypeptide reads, in one-letter code: Protein OPG161 (181 aa).

Over 1 to 34 the chain is Intravirion; the sequence is MMTPENDEEQTSVFSATVYGDKIQGKNKRKRVIG. Residues 35 to 57 traverse the membrane as a helical segment; that stretch reads LCIRISMVISLLSMITMSAFLIV. At 58–181 the chain is on the virion surface side; that stretch reads RLNQCMSANK…SQEVRKYFCT (124 aa). Residue Asn-135 is glycosylated (N-linked (GlcNAc...) asparagine; by host).

The protein belongs to the orthopoxvirus OPG161 family. As to quaternary structure, homodimer, disulfide-linked. Interacts with protein OPG190. Interacts (via C-terminus) with protein OPG164. Interacts with OPG162.

Its subcellular location is the virion membrane. It is found in the host membrane. Its function is as follows. Forms a complex with OPG162 and OPG190 to coordinate the incorporation of OPG164 into wrapped enveloped virion (EV) membranes and, subsequently, the production of actin tails. Therefore plays an essential role in efficient cell-to-cell spread of viral particles. The chain is Protein OPG161 (OPG161) from Monkeypox virus.